The sequence spans 217 residues: MKTIQSIALLSAIVAAPSVLADVEIQVPSSVDILAVNEAKPDLDGGLFSSHKTLTLPDGQNQIVFQYQLAFDKGNDREFVDSDAVIATFDATDTTLTFDLPKYRNTAEAKSGFKNLEWSLVDENQNEISVKQDKLVKDGMQIGRKYPQEAKEYNQQGGIAALAIGTTAGATAAVVQPVTLPAKIDGNAANTAEEMLYFWYEKADAETKQKFKDYVNK.

Positions 1–21 are cleaved as a signal peptide; that stretch reads MKTIQSIALLSAIVAAPSVLA.

This sequence belongs to the UPF0319 family.

The polypeptide is UPF0319 protein VS_II0881 (Vibrio atlanticus (strain LGP32) (Vibrio splendidus (strain Mel32))).